Here is a 165-residue protein sequence, read N- to C-terminus: Lithostathine-1 (165 aa).

The signal sequence occupies residues 1–21; it reads MARNAYFILLSCLIVLSPSQG. Q22 is modified (pyrrolidone carboxylic acid). The 131-residue stretch at 33–163 folds into the C-type lectin domain; that stretch reads ISCPEGSNAY…DAQYSFVCKF (131 aa). Disulfide bonds link C35/C46, C63/C161, and C136/C153. N129 carries N-linked (GlcNAc...) asparagine glycosylation.

As to expression, expressed only in regenerating islets and normal exocrine pancreas, but not in normal pancreatic islets. Expressed strongly in pancreas, moderately in gall bladder, and weakly in liver.

The protein localises to the secreted. Might act as an inhibitor of spontaneous calcium carbonate precipitation. In Mus musculus (Mouse), this protein is Lithostathine-1 (Reg1).